The sequence spans 321 residues: Glucokinase (321 aa).

8-13 contacts ATP; it reads GDVGGT.

Belongs to the bacterial glucokinase family.

The protein localises to the cytoplasm. It catalyses the reaction D-glucose + ATP = D-glucose 6-phosphate + ADP + H(+). In Salmonella arizonae (strain ATCC BAA-731 / CDC346-86 / RSK2980), this protein is Glucokinase.